The chain runs to 351 residues: Photosystem II D2 protein (351 aa).

A helical transmembrane segment spans residues 39–59 (CAYLAVGGWLTGTTFVTSWYT). Residue histidine 116 participates in chlorophyll a binding. A helical transmembrane segment spans residues 123 to 139 (GFCLRQFEIARLVGLRP). 2 residues coordinate pheophytin a: glutamine 128 and asparagine 141. Residues 151 to 164 (VFVSVFLMYPLGQA) form a helical membrane-spanning segment. Histidine 196 provides a ligand contact to chlorophyll a. The chain crosses the membrane as a helical span at residues 206–226 (GALLCAIHGATVQNTLFEDGD). Histidine 213 and phenylalanine 260 together coordinate a plastoquinone. Histidine 213 is a binding site for Fe cation. Fe cation is bound at residue histidine 267. A helical membrane pass occupies residues 277-293 (GLWTSAFGIVGLALNLR).

This sequence belongs to the reaction center PufL/M/PsbA/D family. As to quaternary structure, PSII is composed of 1 copy each of membrane proteins PsbA, PsbB, PsbC, PsbD, PsbE, PsbF, PsbH, PsbI, PsbJ, PsbK, PsbL, PsbM, PsbT, PsbX, PsbY, PsbZ, Psb30/Ycf12, at least 3 peripheral proteins of the oxygen-evolving complex and a large number of cofactors. It forms dimeric complexes. The cofactor is The D1/D2 heterodimer binds P680, chlorophylls that are the primary electron donor of PSII, and subsequent electron acceptors. It shares a non-heme iron and each subunit binds pheophytin, quinone, additional chlorophylls, carotenoids and lipids. There is also a Cl(-1) ion associated with D1 and D2, which is required for oxygen evolution. The PSII complex binds additional chlorophylls, carotenoids and specific lipids..

The protein resides in the plastid. The protein localises to the chloroplast thylakoid membrane. It catalyses the reaction 2 a plastoquinone + 4 hnu + 2 H2O = 2 a plastoquinol + O2. Functionally, photosystem II (PSII) is a light-driven water:plastoquinone oxidoreductase that uses light energy to abstract electrons from H(2)O, generating O(2) and a proton gradient subsequently used for ATP formation. It consists of a core antenna complex that captures photons, and an electron transfer chain that converts photonic excitation into a charge separation. The D1/D2 (PsbA/PsbD) reaction center heterodimer binds P680, the primary electron donor of PSII as well as several subsequent electron acceptors. D2 is needed for assembly of a stable PSII complex. In Porphyra purpurea (Red seaweed), this protein is Photosystem II D2 protein.